A 1583-amino-acid polypeptide reads, in one-letter code: Methyl-CpG-binding domain protein 5/6 homolog sba (1583 aa).

The interval 81 to 115 (AVHQQQQQHHHQQQQQQQHQQQQQILPAGLVNGNG) is disordered. A compositionally biased stretch (low complexity) spans 83 to 104 (HQQQQQHHHQQQQQQQHQQQQQ). The MBD domain occupies 238-308 (RKTATSYNGN…YLFDFNAQVP (71 aa)). 7 disordered regions span residues 427 to 457 (NKLP…PTSQ), 556 to 579 (EPIV…QQQL), 630 to 694 (VTLV…QTQV), 839 to 862 (AELH…AASS), 940 to 980 (PPAQ…ISPQ), 1179 to 1247 (VMSR…RSIC), and 1287 to 1339 (QESP…SFPL). The segment covering 430 to 439 (PATNRTATTP) has biased composition (low complexity). Residues 440-449 (TPAPTPPPQH) are compositionally biased toward pro residues. Over residues 563–579 (QQQQQQQQQQLQQQQQL) the composition is skewed to low complexity. Residues 658–677 (AISTSHESPRQSLSSPTDSV) show a composition bias toward polar residues. 2 stretches are compositionally biased toward low complexity: residues 679-693 (SAKS…PQTQ) and 851-862 (VSQPSPVAAASS). Composition is skewed to polar residues over residues 1179-1195 (VMSR…TTTC), 1216-1240 (CVSS…PSST), and 1287-1313 (QESP…TVRT). A compositionally biased stretch (low complexity) spans 1323-1333 (RGAARAAPSAS). Residues 1346 to 1408 (IGELIWGPAR…VNSLQSLSEG (63 aa)) enclose the PWWP domain. Positions 1415–1446 (AQKDTRKSRKLNSQLERAIQEAMTELDNISAS) form a coiled coil. The interval 1471 to 1497 (IGGQQQYQQQQQQQQQQQSPSSTNNKI) is disordered. Residues 1474-1488 (QQQYQQQQQQQQQQQ) show a composition bias toward low complexity.

In terms of assembly, component of the polycomb repressive deubiquitinase (PR-DUB) complex, at least composed of caly/calypso, Asx and sba (MDB5/6 homolog). Interacts (via MBD domain) with Asx (via PHD domain); the interaction is important for the stability of the PR-DUB complex.

Its function is as follows. Non-catalytic component of the polycomb repressive deubiquitinase (PR-DUB) complex, a complex that specifically mediates deubiquitination of histone H2A monoubiquitinated at 'Lys-119' (H2AK118ub1). Important for maintaining stability of the PR-DUB complex. Probable epigenetic regulator involved in developmental pattern formation and eye development. The polypeptide is Methyl-CpG-binding domain protein 5/6 homolog sba (Drosophila melanogaster (Fruit fly)).